We begin with the raw amino-acid sequence, 505 residues long: Peroxisome proliferator-activated receptor gamma (505 aa).

The tract at residues 1–26 (MGETLGDSLIDPESDSFADTLSASTS) is disordered. Polar residues predominate over residues 17–26 (FADTLSASTS). Ser-112 carries the phosphoserine; by MAPK modification. Positions 136 to 210 (AIECRVCGDK…VGMSHNAIRF (75 aa)) form a DNA-binding region, nuclear receptor. 2 NR C4-type zinc fingers span residues 139-159 (CRVC…CEGC) and 176-198 (CDLN…FQKC). The interaction with FAM120B stretch occupies residues 205–280 (HNAIRFGRMP…DKSPFVIYDM (76 aa)). Residues 238–503 (DLRALAKHLY…HPLLQEIYKD (266 aa)) form the NR LBD domain. A Glycyl lysine isopeptide (Lys-Gly) (interchain with G-Cter in ubiquitin) cross-link involves residue Lys-252. The short motif at 495–503 (PLLQEIYKD) is the 9aaTAD element.

Belongs to the nuclear hormone receptor family. NR1 subfamily. In terms of assembly, interacts with FOXO1 (acetylated form). Heterodimer with other nuclear receptors, such as RXRA. The heterodimer with the retinoic acid receptor RXRA is called adipocyte-specific transcription factor ARF6. Interacts with NCOA6 coactivator, leading to a strong increase in transcription of target genes. Interacts with coactivator PPARBP, leading to a mild increase in transcription of target genes. Interacts with NOCA7 in a ligand-inducible manner. Interacts with NCOA1 and NCOA2 LXXLL motifs. Interacts with ASXL1, ASXL2, DNTTIP2, FAM120B, MAP2K1/MEK1, NR0B2, PDPK1, PRDM16, PRMT2 and TGFB1I1. Interacts (when activated by agonist) with PPP5C. Interacts with HELZ2 and THRAP3; the interaction stimulates the transcriptional activity of PPARG. Interacts with PER2, the interaction is ligand dependent and blocks PPARG recruitment to target promoters. Interacts with NOCT. Interacts with ACTN4. Interacts (when in the liganded conformation) with GPS2. Interacts with CRY1 and CRY2 in a ligand-dependent manner. In the absence of hormonal ligand, interacts with TACC1. In macrophages, interacts with PAQR3 and STUB1; the interactions promote PPARG poylubiquitination and STUB1-mediated degradation. Post-translationally, phosphorylated at basal conditions and dephosphorylated when treated with the ligand. May be dephosphorylated by PPP5C. The phosphorylated form may be inactive and dephosphorylation induces adipogenic activity. In terms of processing, ubiquitinated by E3 ubiquitin-protein ligase complex containing FBXO9; leading to proteasomal degradation. Ubiquitinated at Lys-252 by TRIM55 leading to proteasomal degradation. Ubiquitinated by E3 ubiquitin-protein ligase STUB1/CHIP; leading to proteasomal degradation.

Its subcellular location is the nucleus. The protein resides in the cytoplasm. Its activity is regulated as follows. PDPK1 activates its transcriptional activity independently of its kinase activity. In terms of biological role, nuclear receptor that binds peroxisome proliferators such as hypolipidemic drugs and fatty acids. Once activated by a ligand, the nuclear receptor binds to DNA specific PPAR response elements (PPRE) and modulates the transcription of its target genes, such as acyl-CoA oxidase. It therefore controls the peroxisomal beta-oxidation pathway of fatty acids. Key regulator of adipocyte differentiation and glucose homeostasis. ARF6 acts as a key regulator of the tissue-specific adipocyte P2 (aP2) enhancer. Acts as a critical regulator of gut homeostasis by suppressing NF-kappa-B-mediated pro-inflammatory responses. Plays a role in the regulation of cardiovascular circadian rhythms by regulating the transcription of BMAL1 in the blood vessels. This chain is Peroxisome proliferator-activated receptor gamma (PPARG), found in Canis lupus familiaris (Dog).